The primary structure comprises 388 residues: Trans-enoyl reductase tenC (388 aa).

51 to 54 (VDGK) is a binding site for NADP(+). A substrate-binding site is contributed by 142-149 (VGVASVGM). Residues 219-222 (SSES), Y237, and 284-285 (LD) contribute to the NADP(+) site. 304–308 (SFTQF) contacts substrate. 373–374 (IK) lines the NADP(+) pocket.

It belongs to the zinc-containing alcohol dehydrogenase family. Monomer.

Its pathway is secondary metabolite biosynthesis. Trans-enoyl reductase; part of the gene cluster that mediates the biosynthesis of tenellin-type 2-pyridones, iron-chelating compounds involved in iron stress tolerance, competition with the natural competitor fungus Metarhizium robertsii and insect hosts infection. TenC collaborates with the hybrid PKS-NRPS synthetase tenS to catalyze the assembly of the polyketide-amino acid backbone, since tenS lacks a designated enoylreductase (ER) domain. Upon formation of the polyketide backbone on the thiotemplate of tenS, the triketide is transferred to the NRPS module and linked to tyrosine to produce the pyrrolidine-2-dione intermediates, including pretellinin A, 11-hydropretellenin A, 12-hydropretellenin A, 13-hydropretellenin A, 14-hydropretellenin A, 12-oxopretellenin A and prototellinin D. The pathway begins with the assembly of the polyketide-amino acid backbone by the hybrid PKS-NRPS tenS with the help of the enoyl reductase tenC. These enzymes catalyze the synthesis of the pyrrolidine-2-dione intermediates pretellinin A, 11-hydropretellenin A, 12-hydropretellenin A, 13-hydropretellenin A, 14-hydropretellenin A, 12-oxopretellenin A and prototellinin D. The cytochrome P450 monooxygenase tenA then catalyzes an oxidative ring expansion of pretenellin A and 14-hydropretellenin A to form the 2-pyridone core, leading to pretenellin B and pyridovericin, respectively. The cytochrome P450 monooxygenase tenB is then required for the selective N-hydroxylation of the 2-pyridone nitrogen of yield tellinin and 15-hydroxytellenin (15-HT), respectively. The UDP-glucosyltransferase GT1 and the methyltransferase MT1, located outside the tenS gene cluster, contribute to the stepwise glycosylation and methylation of 15-HT to obtain the glycoside pyridovericin-N-O-(4-O-methyl-beta-D-glucopyranoside) (PMGP). Additional related compounds such as 1-O-methyl-15-HT, (8Z)-1-O-methyl-15-HT, and O-methyltenellin A are also produced but the enzymes involved in their biosynthesis have still to be determined. This Beauveria bassiana (White muscardine disease fungus) protein is Trans-enoyl reductase tenC.